A 561-amino-acid chain; its full sequence is uncharacterized protein (561 aa).

A run of 6 helical transmembrane segments spans residues 10 to 29, 34 to 56, 63 to 80, 95 to 117, 122 to 144, and 164 to 186; these read LLRNNPEIALFLAIAIGYWI, FGSLQIGGVAGSLLAAVLISQIG, LKTVLFALFIYAVGFQSG, VLMAFVLAISGLFTVLAVARMFH, LAAGVAAGGLTQSAIIGTASSAL, and GYAVTYIFGSLAPIIICVNILPW. RCK C-terminal domains follow at residues 205–287 and 294–376; these read QGMA…LLGE and HDMD…ELGS. A run of 5 helical transmembrane segments spans residues 386–403, 407–429, 442–464, 479–501, and 538–560; these read LVFHGVGLVVGLLIGLIV, GSIPLTLGSGGGALLSGLLFGWY, AASTLLVDFGLSGFVAVTGLQTG, FMLGVVVSIVPLIITMLFGRYVL, and SFAITYAIANVLLTLLGPLVVAF.

Belongs to the AAE transporter (TC 2.A.81) family.

It is found in the cell membrane. This is an uncharacterized protein from Zymomonas mobilis subsp. mobilis (strain ATCC 31821 / ZM4 / CP4).